The following is a 325-amino-acid chain: Cytosolic Fe-S cluster assembly factor Nubp1 homolog (325 aa).

The segment at 1–26 (MSSGADVPSDAPAHCPGTQSDDAGKA) is disordered. Cys15, Cys29, Cys32, and Cys38 together coordinate [4Fe-4S] cluster. An ATP-binding site is contributed by 68-75 (GKGGVGKS). 2 residues coordinate [4Fe-4S] cluster: Cys243 and Cys246.

It belongs to the Mrp/NBP35 ATP-binding proteins family. NUBP1/NBP35 subfamily. As to quaternary structure, heterotetramer of 2 Nubp1 and 2 Nubp2 chains. The cofactor is [4Fe-4S] cluster.

It localises to the cytoplasm. In terms of biological role, component of the cytosolic iron-sulfur (Fe/S) protein assembly (CIA) machinery. Required for maturation of extramitochondrial Fe-S proteins. The Nubp1-Nubp2 heterotetramer forms a Fe-S scaffold complex, mediating the de novo assembly of an Fe-S cluster and its transfer to target apoproteins. This chain is Cytosolic Fe-S cluster assembly factor Nubp1 homolog, found in Anopheles gambiae (African malaria mosquito).